Reading from the N-terminus, the 247-residue chain is 1-(5-phosphoribosyl)-5-[(5-phosphoribosylamino)methylideneamino] imidazole-4-carboxamide isomerase 2 (247 aa).

Glu8 serves as the catalytic Proton acceptor. The Proton donor role is filled by Asp128.

This sequence belongs to the HisA/HisF family.

Its subcellular location is the cytoplasm. The catalysed reaction is 1-(5-phospho-beta-D-ribosyl)-5-[(5-phospho-beta-D-ribosylamino)methylideneamino]imidazole-4-carboxamide = 5-[(5-phospho-1-deoxy-D-ribulos-1-ylimino)methylamino]-1-(5-phospho-beta-D-ribosyl)imidazole-4-carboxamide. It participates in amino-acid biosynthesis; L-histidine biosynthesis; L-histidine from 5-phospho-alpha-D-ribose 1-diphosphate: step 4/9. The polypeptide is 1-(5-phosphoribosyl)-5-[(5-phosphoribosylamino)methylideneamino] imidazole-4-carboxamide isomerase 2 (Ruegeria pomeroyi (strain ATCC 700808 / DSM 15171 / DSS-3) (Silicibacter pomeroyi)).